We begin with the raw amino-acid sequence, 178 residues long: MTATATLGGGCFWCVEAAFEELDGVESVTSGYAGGHTEDPTYREVCSGNTGHAEVVQVAYDSDVLAYEDLLEVFFTVHDPTQLNRQGPDVGSQYRSIVLYHDDTQRELAEAYIESLDEAGEYDDDIVTEIERLETFYRAEENHQNYFEKNPQDAYCRMHAQPKIETVREAFAEKVDSR.

The active site involves C11.

The protein belongs to the MsrA Met sulfoxide reductase family.

It catalyses the reaction L-methionyl-[protein] + [thioredoxin]-disulfide + H2O = L-methionyl-(S)-S-oxide-[protein] + [thioredoxin]-dithiol. The enzyme catalyses [thioredoxin]-disulfide + L-methionine + H2O = L-methionine (S)-S-oxide + [thioredoxin]-dithiol. In terms of biological role, has an important function as a repair enzyme for proteins that have been inactivated by oxidation. Catalyzes the reversible oxidation-reduction of methionine sulfoxide in proteins to methionine. This is Peptide methionine sulfoxide reductase MsrA from Natronomonas pharaonis (strain ATCC 35678 / DSM 2160 / CIP 103997 / JCM 8858 / NBRC 14720 / NCIMB 2260 / Gabara) (Halobacterium pharaonis).